A 1083-amino-acid polypeptide reads, in one-letter code: Ubiquitin-protein ligase E3C (1083 aa).

2 stretches are compositionally biased toward basic and acidic residues: residues Met-1–Thr-10 and Ser-20–Glu-40. The interval Met-1–Glu-40 is disordered. A cis-determinant of acceptor ubiquitin-binding region spans residues Met-1–Arg-60. One can recognise an IQ domain in the interval Arg-45–Asp-74. The disordered stretch occupies residues Ser-355–Arg-385. Residues Ala-375–Arg-385 show a composition bias toward basic and acidic residues. Residues Asn-744–Ser-1083 enclose the HECT domain. Lys-903 participates in a covalent cross-link: Glycyl lysine isopeptide (Lys-Gly) (interchain with G-Cter in ubiquitin); by autocatalysis. Cys-1051 acts as the Glycyl thioester intermediate in catalysis.

Belongs to the UBE3C family. As to quaternary structure, interacts with 26S proteasomes. Interacts (via the HECT domain) with UBE2D1 and, less efficiently, with UBE2L3. Autoubiquitinated; promoting its own degradation. In terms of tissue distribution, highly expressed in skeletal muscle. Detected at much lower levels in kidney and pancreas.

The enzyme catalyses S-ubiquitinyl-[E2 ubiquitin-conjugating enzyme]-L-cysteine + [acceptor protein]-L-lysine = [E2 ubiquitin-conjugating enzyme]-L-cysteine + N(6)-ubiquitinyl-[acceptor protein]-L-lysine.. Its pathway is protein modification; protein ubiquitination. E3 ubiquitin-protein ligase that specifically catalyzes 'Lys-29'- and 'Lys-48'-linked polyubiquitin chains. Accepts ubiquitin from the E2 ubiquitin-conjugating enzyme UBE2D1 in the form of a thioester and then directly transfers the ubiquitin to targeted substrates. Associates with the proteasome and promotes elongation of ubiquitin chains on substrates bound to the 26S proteasome. Also catalyzes 'Lys-29'- and 'Lys-48'-linked ubiquitination of 26S proteasome subunit ADRM1/RPN13 in response to proteotoxic stress, impairing the ability of the proteasome to bind and degrade ubiquitin-conjugated proteins. Acts as a negative regulator of autophagy by mediating 'Lys-29'- and 'Lys-48'-linked ubiquitination of PIK3C3/VPS34, promoting its degradation. Can assemble unanchored poly-ubiquitin chains in either 'Lys-29'- or 'Lys-48'-linked polyubiquitin chains; with some preference for 'Lys-48' linkages. Acts as a negative regulator of type I interferon by mediating 'Lys-48'-linked ubiquitination of IRF3 and IRF7, leading to their degradation by the proteasome. Catalyzes ubiquitination and degradation of CAND2. The polypeptide is Ubiquitin-protein ligase E3C (Homo sapiens (Human)).